We begin with the raw amino-acid sequence, 70 residues long: Small ribosomal subunit protein bS21 (70 aa).

This sequence belongs to the bacterial ribosomal protein bS21 family.

This is Small ribosomal subunit protein bS21 from Nitrosomonas eutropha (strain DSM 101675 / C91 / Nm57).